The primary structure comprises 141 residues: Large ribosomal subunit protein uL11 (141 aa).

Belongs to the universal ribosomal protein uL11 family. As to quaternary structure, part of the ribosomal stalk of the 50S ribosomal subunit. Interacts with L10 and the large rRNA to form the base of the stalk. L10 forms an elongated spine to which L12 dimers bind in a sequential fashion forming a multimeric L10(L12)X complex. In terms of processing, one or more lysine residues are methylated.

In terms of biological role, forms part of the ribosomal stalk which helps the ribosome interact with GTP-bound translation factors. The sequence is that of Large ribosomal subunit protein uL11 from Gloeobacter violaceus (strain ATCC 29082 / PCC 7421).